Here is a 96-residue protein sequence, read N- to C-terminus: Protein TraA (96 aa).

The chain is Protein TraA (traA) from Escherichia coli.